The primary structure comprises 377 residues: Putative zinc metalloprotease Atu1380 (377 aa).

His-29 contacts Zn(2+). The active site involves Glu-30. His-33 is a binding site for Zn(2+). The next 3 helical transmembrane spans lie at 118–140 (VAAG…FGIY), 299–321 (LGIS…LNLM), and 351–373 (VAFR…NDIS). The 74-residue stretch at 129–202 (AILIFAVLFG…TPITVTVERA (74 aa)) folds into the PDZ domain.

This sequence belongs to the peptidase M50B family. Requires Zn(2+) as cofactor.

Its subcellular location is the cell inner membrane. The sequence is that of Putative zinc metalloprotease Atu1380 from Agrobacterium fabrum (strain C58 / ATCC 33970) (Agrobacterium tumefaciens (strain C58)).